The primary structure comprises 615 residues: DNA mismatch repair protein MutL (615 aa).

The disordered stretch occupies residues Phe-363–Tyr-397. Over residues Ala-364 to Pro-391 the composition is skewed to low complexity.

Belongs to the DNA mismatch repair MutL/HexB family.

Its function is as follows. This protein is involved in the repair of mismatches in DNA. It is required for dam-dependent methyl-directed DNA mismatch repair. May act as a 'molecular matchmaker', a protein that promotes the formation of a stable complex between two or more DNA-binding proteins in an ATP-dependent manner without itself being part of a final effector complex. This Escherichia coli O9:H4 (strain HS) protein is DNA mismatch repair protein MutL.